We begin with the raw amino-acid sequence, 99 residues long: Cell division protein FtsB (99 aa).

Topologically, residues 1 to 3 are cytoplasmic; sequence MKF. A helical transmembrane segment spans residues 4–21; sequence FVIALIVLLGLLQYRLWS. Over 22-99 the chain is Periplasmic; sequence GDNSLPEYFV…GDRSVSSPSQ (78 aa). The stretch at 31 to 73 forms a coiled coil; it reads VLQKQIAAQQDGNAKLNERNQVLKEEIIDLKSGTEAIEERARN.

The protein belongs to the FtsB family. As to quaternary structure, part of a complex composed of FtsB, FtsL and FtsQ.

Its subcellular location is the cell inner membrane. Essential cell division protein. May link together the upstream cell division proteins, which are predominantly cytoplasmic, with the downstream cell division proteins, which are predominantly periplasmic. This Shewanella sp. (strain MR-4) protein is Cell division protein FtsB.